Consider the following 258-residue polypeptide: UBX domain-containing protein 2A (258 aa).

Residues 1–152 (MKEVDNLDSI…SATPRIVSKA (152 aa)) are required for interaction with CHRNA3. A required for inhibition of CHRNA3 ubiquitination and translocation of CHRNA3 to the plasma membrane resulting in an increase in acetylcholine-gated nicotinic acetylcholine receptor currents region spans residues 1–165 (MKEVDNLDSI…EVDNKSTLSA (165 aa)). An SEP domain is found at 61–125 (QVDVNIKLWK…VEDKKNEVCM (65 aa)). The segment at 168 to 258 (LNNLEPITRI…QKTAEPFRKL (91 aa)) is required for interaction with VCP. The UBX domain maps to 170-247 (NLEPITRIQI…DLQNAVIIQR (78 aa)).

As to quaternary structure, part of a complex composed of STUB1/CHIP, VCP/p97, CHRNA3, and UBXN2A that modulates the ubiquitination and endoplasmic reticulum-associated degradation (ERAD) of CHRNA3. Within the complex UBXN2A acts as a scaffold protein required for the interaction of CHRNA3 with VCP/p97, this interaction also inhibits CHRNA3 ubiquitination by STUB1/CHIP and subsequently ERAD. Interacts (via SEP domain) with CHRNA3 and interacts (via UBX domain) with VCP/P97; these interactions are required for the interaction of CHRNA3 with the STUB1-VCP-UBXN2A complex. Interacts with HSPA9/MOT-2 (via SBD domain); the interaction inhibits HSPA9/MOT-2 interaction with and degradation of p53, thereby promotes p53 translocation to the nucleus. Interacts with RICTOR. Ubiquitinated.

The protein resides in the golgi apparatus. It localises to the endoplasmic reticulum. The protein localises to the perikaryon. Its subcellular location is the cell projection. It is found in the dendrite. The protein resides in the nucleus. It localises to the cytoplasm. Functionally, acts to repress the ubiquitination and subsequent endoplasmic reticulum-associated degradation of CHRNA3 by the STUB1-VCP-UBXN2A complex in cortical neurons. Also acts to promote the translocation of CHRNA3 to the plasma membrane and subsequently increases plasma membrane acetylcholine-gated ion-channel activation. Plays a role in the inhibition of STUB1-mediated TP53 degradation, via its interaction with HSPA9 which acts to inhibit TP53 binding to HSPA9. Positively mediates the ubiquitination and proteosomal degradation of RICTOR, may thereby act as a negative regulator of the mTORC2 pathway. In Rattus norvegicus (Rat), this protein is UBX domain-containing protein 2A.